The following is a 252-amino-acid chain: 7-cyano-7-deazaguanine synthase (252 aa).

An ATP-binding site is contributed by 22–32 (FSGGQDSTTCL). Zn(2+) is bound by residues Cys-215, Cys-230, Cys-233, and Cys-236.

This sequence belongs to the QueC family. Zn(2+) serves as cofactor.

The catalysed reaction is 7-carboxy-7-deazaguanine + NH4(+) + ATP = 7-cyano-7-deazaguanine + ADP + phosphate + H2O + H(+). The protein operates within purine metabolism; 7-cyano-7-deazaguanine biosynthesis. Its function is as follows. Catalyzes the ATP-dependent conversion of 7-carboxy-7-deazaguanine (CDG) to 7-cyano-7-deazaguanine (preQ(0)). The chain is 7-cyano-7-deazaguanine synthase from Granulibacter bethesdensis (strain ATCC BAA-1260 / CGDNIH1).